The following is a 323-amino-acid chain: Formyltetrahydrofolate deformylase 1, mitochondrial (323 aa).

Residues 1-25 constitute a mitochondrion transit peptide; the sequence is MIRRITERASGFAKNIPILKSSRFH. The 84-residue stretch at 41-124 folds into the ACT domain; that stretch reads VHVFHCQDAV…SVVRVPSIDP (84 aa). Residue Asp-267 is part of the active site.

Belongs to the PurU family. As to expression, expressed in leaves, cotyledons, roots, seeds and flowers.

The protein resides in the mitochondrion. The catalysed reaction is (6R)-10-formyltetrahydrofolate + H2O = (6S)-5,6,7,8-tetrahydrofolate + formate + H(+). In terms of biological role, deformylase involved in photorespiration. Prevents excessive accumulation of 5-formyl tetrahydrofolate (THF), a potent inhibitor of the Gly decarboxylase/Ser hydroxymethyltransferase complex. The protein is Formyltetrahydrofolate deformylase 1, mitochondrial (PURU1) of Arabidopsis thaliana (Mouse-ear cress).